Reading from the N-terminus, the 199-residue chain is Small ribosomal subunit protein uS5 (199 aa).

Residues 1–29 (MATAGRRGGAASERRERRESRRQEASPEK) are disordered. Residues 12 to 27 (SERRERRESRRQEASP) are compositionally biased toward basic and acidic residues. An S5 DRBM domain is found at 32–95 (FLERVVTINR…EEAKKHFFTV (64 aa)).

Belongs to the universal ribosomal protein uS5 family. Part of the 30S ribosomal subunit. Contacts proteins S4 and S8.

With S4 and S12 plays an important role in translational accuracy. Its function is as follows. Located at the back of the 30S subunit body where it stabilizes the conformation of the head with respect to the body. The sequence is that of Small ribosomal subunit protein uS5 from Acidothermus cellulolyticus (strain ATCC 43068 / DSM 8971 / 11B).